We begin with the raw amino-acid sequence, 465 residues long: Chromosomal replication initiator protein DnaA (465 aa).

The interval 1–80 is domain I, interacts with DnaA modulators; that stretch reads MLWTDCLTRL…VEILVDSRPG (80 aa). The domain II stretch occupies residues 80–127; that stretch reads GAILSPAEQPATTTAALSSTPVVPQRVKKEVVEPAATQSNKILNSKKR. Residues 128–345 form a domain III, AAA+ region region; that stretch reads LLNPLFTFSL…GALNKVVAIA (218 aa). Residues Gly173, Gly175, Lys176, and Thr177 each contribute to the ATP site. The tract at residues 346-465 is domain IV, binds dsDNA; it reads RFKGSQIDLD…YKNLLRLLQS (120 aa).

It belongs to the DnaA family. As to quaternary structure, oligomerizes as a right-handed, spiral filament on DNA at oriC.

Its subcellular location is the cytoplasm. In terms of biological role, plays an essential role in the initiation and regulation of chromosomal replication. ATP-DnaA binds to the origin of replication (oriC) to initiate formation of the DNA replication initiation complex once per cell cycle. Binds the DnaA box (a 9 base pair repeat at the origin) and separates the double-stranded (ds)DNA. Forms a right-handed helical filament on oriC DNA; dsDNA binds to the exterior of the filament while single-stranded (ss)DNA is stabiized in the filament's interior. The ATP-DnaA-oriC complex binds and stabilizes one strand of the AT-rich DNA unwinding element (DUE), permitting loading of DNA polymerase. After initiation quickly degrades to an ADP-DnaA complex that is not apt for DNA replication. Binds acidic phospholipids. The sequence is that of Chromosomal replication initiator protein DnaA from Acinetobacter baylyi (strain ATCC 33305 / BD413 / ADP1).